The following is a 371-amino-acid chain: MAQKGIGVSNLPNVKYRSFCKAGIDFNIMTVGSNGLGKSSFINQMLGDSILSSDPFLKPEDGHHSNETVRALDEDIVDDPESKYFHRNSLINIQISKFFVMENDFQTRVTVTEVDGVGDGVCNEGCWDPIVELIQDNFRDYLDQERKNVRSLIKDKRIHICLYFLEPNPSHVSLVDIRTMKEISKICNLIPVVGKSDLLSDSEREECRNRIVEVLSMENIDVFRLDILEKEKISRTESPFFIIAKNVNSGDSSGHNREYPWGTMFPEKVESNDFYFLVDSLIAKNLIRLVETTEVFYDEYKTREIGLSIASKPGALGEDDRRLTKEIQKKIKEDERTIVELRQKLIEKRKYYESKMLEITSKYSNEKINSS.

Residues 22-307 (AGIDFNIMTV…DEYKTREIGL (286 aa)) enclose the Septin-type G domain. The G1 motif stretch occupies residues 32 to 39 (GSNGLGKS). GTP-binding positions include 32-39 (GSNGLGKS), Gly-116, 195-203 (KSDLLSDSE), and Arg-257. The tract at residues 113–116 (EVDG) is G3 motif. The interval 194–197 (GKSD) is G4 motif.

The protein belongs to the TRAFAC class TrmE-Era-EngA-EngB-Septin-like GTPase superfamily. Septin GTPase family. As to quaternary structure, component of the septin complex.

In terms of biological role, septins are GTPases involved in cytokinesis. The septins localize to the site of cleavage and act as a structural scaffold that recruits different components involved in diverse processes at specific stages during the cell cycle. Septins are also involved in cell morphogenesis, chitin deposition, cell cycle regulation, cell compartmentalization and spore wall formation. The protein is Cell division control protein 3 (CDC3) of Encephalitozoon cuniculi (strain GB-M1) (Microsporidian parasite).